The chain runs to 487 residues: Cyclic AMP-dependent transcription factor ATF-2 (487 aa).

The C2H2-type zinc-finger motif lies at 7–31 (FLCTAPGCGQRFTNEDHLAVHKHKH). A Phosphothreonine; by PKC/PRKCH modification is found at T34. S44 is modified (phosphoserine). T51 is modified (phosphothreonine; by MAPK11 and MAPK14). T53 carries the phosphothreonine; by MAPK1, MAPK3, MAPK11, MAPK12, MAPK14 and PLK3 modification. T55 is modified (phosphothreonine; by VRK1). A phosphoserine mark is found at S72 and S94. T98 carries the phosphothreonine modification. S103 bears the Phosphoserine; by PKC/PRKCA and PKC/PRKCB mark. Disordered regions lie at residues 106 to 137 (EEPS…PLAQ) and 241 to 355 (PGIP…RQKR). Residue S118 is modified to Phosphoserine. Residues 264–275 (LTQQHPPVTNGD) are compositionally biased toward polar residues. An essential for its histone acetyltransferase activity region spans residues 278 to 281 (KGHG). Residues 300-316 (PATSTTETPASPAHTTP) are compositionally biased toward low complexity. S310 carries the post-translational modification Phosphoserine. At S322 the chain carries Phosphoserine; by PKC/PRKCA and PKC/PRKCB. Basic and acidic residues predominate over residues 328–345 (AANEDPDEKRRKFLERNR). Positions 334-397 (DEKRRKFLER…AQLKQLLLAH (64 aa)) constitute a bZIP domain. Residues 336–356 (KRRKFLERNRAAASRCRQKRK) are basic motif. K339 carries the N6-acetyllysine modification. S349 is modified (phosphoserine; by PKC/PRKCA and PKC/PRKCB). Position 356 is an N6-acetyllysine (K356). The interval 362 to 390 (LEKKAEDLSSLNGQLQSEVTLLRNEVAQL) is leucine-zipper. The Nuclear export signal signature appears at 387–396 (VAQLKQLLLA). Residues 407–453 (KKSGYHTADKDDSSEDLSVPSSPHTEAIQHSSVSTSNGVSSTSKAEA) are disordered. Phosphoserine occurs at positions 424 and 428. Positions 425-436 (VPSSPHTEAIQH) are enriched in polar residues. A compositionally biased stretch (low complexity) spans 437–449 (SSVSTSNGVSSTS). Phosphoserine; by ATM is present on residues S472 and S480.

This sequence belongs to the bZIP family. ATF subfamily. Binds DNA as a dimer and can form a homodimer in the absence of DNA. Can form a heterodimer with JUN. Heterodimerization is essential for its transcriptional activity. Interacts with SMAD3 and SMAD4. Interacts with the HK1/VDAC1 complex. Interacts with NBN, MRE11, XPO1, KAT5 and CUL3. Binds through its N-terminal region to UTF1 which acts as a coactivator of ATF2 transcriptional activity. In terms of processing, phosphorylation of Thr-51 by MAPK14 and MAPK11, and at Thr-53 by MAPK1/ERK2, MAPK3/ERK1, MAPK11, MAPK12 and MAPK14 in response to external stimulus like insulin causes increased transcriptional activity. Phosphorylated by PLK3 following hyperosmotic stress. Also phosphorylated and activated by JNK and CaMK4. ATM-mediated phosphorylation at Ser-472 and Ser-480 stimulates its function in DNA damage response. Phosphorylation at Ser-44, Thr-55 and Ser-103 activates its transcriptional activity. Phosphorylation at Thr-51 or Thr-53 enhances acetylation of histones H2B and H4.

It localises to the nucleus. It is found in the cytoplasm. Its subcellular location is the mitochondrion outer membrane. In terms of biological role, transcriptional activator which regulates the transcription of various genes, including those involved in anti-apoptosis, cell growth, and DNA damage response. Dependent on its binding partner, binds to CRE (cAMP response element) consensus sequences (5'-TGACGTCA-3') or to AP-1 (activator protein 1) consensus sequences (5'-TGACTCA-3'). In the nucleus, contributes to global transcription and the DNA damage response, in addition to specific transcriptional activities that are related to cell development, proliferation and death. In the cytoplasm, interacts with and perturbs HK1- and VDAC1-containing complexes at the mitochondrial outer membrane, thereby impairing mitochondrial membrane potential, inducing mitochondrial leakage and promoting cell death. The phosphorylated form (mediated by ATM) plays a role in the DNA damage response and is involved in the ionizing radiation (IR)-induced S phase checkpoint control and in the recruitment of the MRN complex into the IR-induced foci (IRIF). Exhibits histone acetyltransferase (HAT) activity which specifically acetylates histones H2B and H4 in vitro. In concert with CUL3 and RBX1, promotes the degradation of KAT5 thereby attenuating its ability to acetylate and activate ATM. Can elicit oncogenic or tumor suppressor activities depending on the tissue or cell type. The protein is Cyclic AMP-dependent transcription factor ATF-2 (Atf2) of Mus musculus (Mouse).